The following is a 328-amino-acid chain: Biotin synthase (328 aa).

In terms of domain architecture, Radical SAM core spans 48–275 (NRIQLSKLLN…KSHVRLTAGR (228 aa)). Positions 63, 67, and 70 each coordinate [4Fe-4S] cluster. Residues C107, C138, C198, and R270 each contribute to the [2Fe-2S] cluster site.

The protein belongs to the radical SAM superfamily. Biotin synthase family. Homodimer. Requires [4Fe-4S] cluster as cofactor. [2Fe-2S] cluster is required as a cofactor.

It catalyses the reaction (4R,5S)-dethiobiotin + (sulfur carrier)-SH + 2 reduced [2Fe-2S]-[ferredoxin] + 2 S-adenosyl-L-methionine = (sulfur carrier)-H + biotin + 2 5'-deoxyadenosine + 2 L-methionine + 2 oxidized [2Fe-2S]-[ferredoxin]. It participates in cofactor biosynthesis; biotin biosynthesis; biotin from 7,8-diaminononanoate: step 2/2. Its function is as follows. Catalyzes the conversion of dethiobiotin (DTB) to biotin by the insertion of a sulfur atom into dethiobiotin via a radical-based mechanism. The polypeptide is Biotin synthase (Brucella abortus (strain S19)).